A 51-amino-acid polypeptide reads, in one-letter code: Protein HokD (51 aa).

The chain crosses the membrane as a helical span at residues 5–25 (KAMLIALIVICLTVIVTALVT).

Belongs to the Hok/Gef family.

The protein localises to the cell inner membrane. In terms of biological role, toxic component of a type I toxin-antitoxin (TA) system. When overexpressed kills cells within minutes; causes collapse of the transmembrane potential and arrest of respiration. Its toxic effect is probably neutralized by an antisense antitoxin Sok RNA. This is Protein HokD (hokD) from Escherichia coli O157:H7.